A 252-amino-acid polypeptide reads, in one-letter code: Isoprenyl transferase (252 aa).

D28 is a catalytic residue. D28 contributes to the Mg(2+) binding site. Residues 29-32, W33, R41, H45, and 73-75 each bind substrate; these read GNGR and STE. The active-site Proton acceptor is N76. Substrate contacts are provided by residues W77, R79, R200, and 206–208; that span reads RLS. Mg(2+) is bound at residue E219.

The protein belongs to the UPP synthase family. In terms of assembly, homodimer. Mg(2+) serves as cofactor.

Catalyzes the condensation of isopentenyl diphosphate (IPP) with allylic pyrophosphates generating different type of terpenoids. This is Isoprenyl transferase from Streptococcus pneumoniae serotype 4 (strain ATCC BAA-334 / TIGR4).